We begin with the raw amino-acid sequence, 242 residues long: 3-deoxy-manno-octulosonate cytidylyltransferase (242 aa).

The protein belongs to the KdsB family.

It is found in the cytoplasm. It carries out the reaction 3-deoxy-alpha-D-manno-oct-2-ulosonate + CTP = CMP-3-deoxy-beta-D-manno-octulosonate + diphosphate. It functions in the pathway nucleotide-sugar biosynthesis; CMP-3-deoxy-D-manno-octulosonate biosynthesis; CMP-3-deoxy-D-manno-octulosonate from 3-deoxy-D-manno-octulosonate and CTP: step 1/1. The protein operates within bacterial outer membrane biogenesis; lipopolysaccharide biosynthesis. In terms of biological role, activates KDO (a required 8-carbon sugar) for incorporation into bacterial lipopolysaccharide in Gram-negative bacteria. The polypeptide is 3-deoxy-manno-octulosonate cytidylyltransferase (Anaeromyxobacter dehalogenans (strain 2CP-C)).